Here is a 680-residue protein sequence, read N- to C-terminus: DNA-directed RNA polymerase subunit beta' (680 aa).

Residues Cys69, Cys71, Cys87, and Cys90 each contribute to the Zn(2+) site. Positions 489, 491, and 493 each coordinate Mg(2+).

Belongs to the RNA polymerase beta' chain family. RpoC1 subfamily. In plastids the minimal PEP RNA polymerase catalytic core is composed of four subunits: alpha, beta, beta', and beta''. When a (nuclear-encoded) sigma factor is associated with the core the holoenzyme is formed, which can initiate transcription. It depends on Mg(2+) as a cofactor. Zn(2+) is required as a cofactor.

The protein resides in the plastid. Its subcellular location is the chloroplast. The enzyme catalyses RNA(n) + a ribonucleoside 5'-triphosphate = RNA(n+1) + diphosphate. DNA-dependent RNA polymerase catalyzes the transcription of DNA into RNA using the four ribonucleoside triphosphates as substrates. The polypeptide is DNA-directed RNA polymerase subunit beta' (Draba nemorosa (Woodland whitlowgrass)).